Here is a 432-residue protein sequence, read N- to C-terminus: MRVVILGSGVVGVTSAWYLSQAGHDVTVIDRESGPAQETSAANAGQISPGYAAPWAAPGVPLKAIKWMFQRHAPLAVRLDGTPFQLKWMWQMLRNCDTRHYMENKGRMVRLAEYSRDCLKTLRAATGIEYEGRQGGTLQLFRTAQQYENATRDIAVLEDAGVPYQLLEASRLAEVEPALAEVAHKLTGGLRLPNDETGDCQLFTQRLARMAEQAGVTFRFNTPVEKLLYENDQIYGVKCADEIIKADAYVMAFGSYSTAMLKGIVDIPVYPLKGYSLTIPIVEPDGAPVSTILDETYKIAITRFDKRIRVGGMAEIVGFNTDLLQPRRETLEMVVRDLFPRGGHIEQATFWTGLRPMTPDGTPVVGRTRYKNLWLNTGHGTLGWTMACGSGQLLSDILSGRTPAIPYDDLSVARYRSDFTPTRPQRLHSAHN.

3–17 (VVILGSGVVGVTSAW) is a binding site for FAD.

The protein belongs to the DadA oxidoreductase family. Requires FAD as cofactor.

It carries out the reaction a D-alpha-amino acid + A + H2O = a 2-oxocarboxylate + AH2 + NH4(+). The protein operates within amino-acid degradation; D-alanine degradation; NH(3) and pyruvate from D-alanine: step 1/1. Its function is as follows. Oxidative deamination of D-amino acids. This chain is D-amino acid dehydrogenase, found in Salmonella agona (strain SL483).